The primary structure comprises 151 residues: UPF0178 protein Sde_3033 (151 aa).

It belongs to the UPF0178 family.

The sequence is that of UPF0178 protein Sde_3033 from Saccharophagus degradans (strain 2-40 / ATCC 43961 / DSM 17024).